Here is a 299-residue protein sequence, read N- to C-terminus: tRNA dimethylallyltransferase (299 aa).

ATP is bound at residue 13–20 (GPTASGKT). 15 to 20 (TASGKT) contributes to the substrate binding site. The interval 38-41 (DSRQ) is interaction with substrate tRNA.

This sequence belongs to the IPP transferase family. Monomer. It depends on Mg(2+) as a cofactor.

It catalyses the reaction adenosine(37) in tRNA + dimethylallyl diphosphate = N(6)-dimethylallyladenosine(37) in tRNA + diphosphate. Its function is as follows. Catalyzes the transfer of a dimethylallyl group onto the adenine at position 37 in tRNAs that read codons beginning with uridine, leading to the formation of N6-(dimethylallyl)adenosine (i(6)A). This is tRNA dimethylallyltransferase from Prochlorococcus marinus (strain AS9601).